A 272-amino-acid polypeptide reads, in one-letter code: Acidic leucine-rich nuclear phosphoprotein 32 family member B (272 aa).

4 LRR repeats span residues 16 to 40 (PAAVQELVLDNCKANDGKIEGLTDE), 43 to 64 (NLEFLSLINVGLFSVSDLPKLP), 65 to 84 (KLKKLELSENRIFGGLDRLA), and 89 to 110 (SLTHLNLSGNNLKDISTLEPLK). The region spanning 123–161 (CEVTNRSDYRETVFRLLPQLSYLDGYDREDQEAPDSDVE) is the LRRCT domain. The span at 149-254 (DREDQEAPDS…DEDEDEEEEE (106 aa)) shows a compositional bias: acidic residues. The segment at 149 to 272 (DREDQEAPDS…RETDDEGEDD (124 aa)) is disordered. Phosphoserine is present on residues Ser-164 and Ser-171. Over residues 255 to 265 (SGKGEKRKRET) the composition is skewed to basic and acidic residues. Residues 260–263 (KRKR) carry the Nuclear localization signal motif. Thr-265 bears the Phosphothreonine mark.

Belongs to the ANP32 family. Interacts with histones H3 and H4. Interacts with KLF5; this interaction induces promoter region-specific histone incorporation and inhibition of histone acetylation by ANP32B. In terms of processing, some glutamate residues are glycylated by TTLL8. This modification occurs exclusively on glutamate residues and results in a glycine chain on the gamma-carboxyl group. Post-translationally, directly cleaved by caspase-3/CASP3. In terms of tissue distribution, predominantly expressed in brain. Expressed in the entire embryonic brain, whereas in the adult brain its expression is restricted to the subventricular zone where there are neural progenitor cells.

The protein localises to the nucleus. Its function is as follows. Multifunctional protein that is involved in the regulation of many processes including cell proliferation, apoptosis, cell cycle progression or transcription. Regulates the proliferation of neuronal stem cells, differentiation of leukemic cells and progression from G1 to S phase of the cell cycle. As negative regulator of caspase-3-dependent apoptosis, may act as an antagonist of ANP32A in regulating tissue homeostasis. Exhibits histone chaperone properties, able to recruit histones to certain promoters, thus regulating the transcription of specific genes. Also plays an essential role in the nucleocytoplasmic transport of specific mRNAs via the uncommon nuclear mRNA export receptor XPO1/CRM1. Participates in the regulation of adequate adaptive immune responses by acting on mRNA expression and cell proliferation. The polypeptide is Acidic leucine-rich nuclear phosphoprotein 32 family member B (Anp32b) (Rattus norvegicus (Rat)).